A 510-amino-acid chain; its full sequence is D-alanine--D-alanyl carrier protein ligase (510 aa).

157-158 (TS) is an ATP binding site. Asp202 is a D-alanine binding site. An ATP-binding site is contributed by 297 to 302 (NTYGPT). Val306 lines the D-alanine pocket. ATP contacts are provided by Asp389 and Lys498. Lys498 contributes to the D-alanine binding site.

This sequence belongs to the ATP-dependent AMP-binding enzyme family. DltA subfamily.

Its subcellular location is the cytoplasm. It catalyses the reaction holo-[D-alanyl-carrier protein] + D-alanine + ATP = D-alanyl-[D-alanyl-carrier protein] + AMP + diphosphate. It participates in cell wall biogenesis; lipoteichoic acid biosynthesis. Catalyzes the first step in the D-alanylation of lipoteichoic acid (LTA), the activation of D-alanine and its transfer onto the D-alanyl carrier protein (Dcp) DltC. In an ATP-dependent two-step reaction, forms a high energy D-alanyl-AMP intermediate, followed by transfer of the D-alanyl residue as a thiol ester to the phosphopantheinyl prosthetic group of the Dcp. D-alanylation of LTA plays an important role in modulating the properties of the cell wall in Gram-positive bacteria, influencing the net charge of the cell wall. This chain is D-alanine--D-alanyl carrier protein ligase, found in Listeria welshimeri serovar 6b (strain ATCC 35897 / DSM 20650 / CCUG 15529 / CIP 8149 / NCTC 11857 / SLCC 5334 / V8).